Reading from the N-terminus, the 691-residue chain is Lipase 2 (691 aa).

The N-terminal stretch at Met1–Ala37 is a signal peptide. The tract at residues Glu34–Lys267 is disordered. The propeptide occupies Ser38–Lys296. Residues Ile41–Lys72 show a composition bias toward polar residues. Residues Gln73–Gly82 are compositionally biased toward basic and acidic residues. Composition is skewed to polar residues over residues Leu94 to Gln115, Ser125 to Asn135, Asp142 to Ile172, and Pro186 to Lys196. 2 stretches are compositionally biased toward basic and acidic residues: residues Thr197 to Asn214 and Lys258 to Lys267. Ser413 acts as the Nucleophile in catalysis. A Ca(2+)-binding site is contributed by Gly580. Asp604 acts as the Charge relay system in catalysis. Ca(2+) is bound at residue Asp645. His646 serves as the catalytic Charge relay system. Ca(2+) contacts are provided by Asp648, Asp653, and Asp656.

The protein belongs to the AB hydrolase superfamily. Lipase family.

The protein resides in the secreted. The catalysed reaction is a triacylglycerol + H2O = a diacylglycerol + a fatty acid + H(+). The protein is Lipase 2 (lip2) of Staphylococcus aureus (strain MRSA252).